The chain runs to 322 residues: Helix-loop-helix 34 (322 aa).

The span at 1 to 11 (METNLSEEKQK) shows a compositional bias: basic and acidic residues. A disordered region spans residues 1–23 (METNLSEEKQKPSKSQAQQRRQM). The region spanning 8 to 62 (EKQKPSKSQAQQRRQMENYEFSQLANELPLARAISGQHIDKTTMVRLATAYIKLH) is the bHLH domain. 2 consecutive PAS domains span residues 82–152 (DSLW…DLNW) and 203–276 (PTPV…FNLG).

As to quaternary structure, efficient DNA binding requires dimerization with another bHLH protein. In terms of tissue distribution, expressed in a small subset of neurons, probably AVJL and AVJR. Expressed in the AVH neurons.

The protein localises to the nucleus. Functionally, transcription factor. Involved in specifying AVH neuron identity, acting in concert with unc-42. Involved in serotonin-mediated feeding behavior, probably acting by modulating expression of genes involved in glutamate signaling. This chain is Helix-loop-helix 34 (hlh-34), found in Caenorhabditis elegans.